Reading from the N-terminus, the 341-residue chain is Uroporphyrinogen decarboxylase (341 aa).

Residues 25 to 29 (RQAGR), Phe44, Asp74, Tyr151, Ser206, and His318 each bind substrate.

It belongs to the uroporphyrinogen decarboxylase family. As to quaternary structure, homodimer.

It is found in the cytoplasm. The enzyme catalyses uroporphyrinogen III + 4 H(+) = coproporphyrinogen III + 4 CO2. It functions in the pathway porphyrin-containing compound metabolism; protoporphyrin-IX biosynthesis; coproporphyrinogen-III from 5-aminolevulinate: step 4/4. Catalyzes the decarboxylation of four acetate groups of uroporphyrinogen-III to yield coproporphyrinogen-III. This Christiangramia forsetii (strain DSM 17595 / CGMCC 1.15422 / KT0803) (Gramella forsetii) protein is Uroporphyrinogen decarboxylase.